Reading from the N-terminus, the 156-residue chain is E3 ubiquitin-protein ligase RNF181 (156 aa).

The RING-type; atypical zinc-finger motif lies at Cys79–Arg120.

This sequence belongs to the RNF181 family.

The catalysed reaction is S-ubiquitinyl-[E2 ubiquitin-conjugating enzyme]-L-cysteine + [acceptor protein]-L-lysine = [E2 ubiquitin-conjugating enzyme]-L-cysteine + N(6)-ubiquitinyl-[acceptor protein]-L-lysine.. It functions in the pathway protein modification; protein ubiquitination. Functionally, E3 ubiquitin-protein ligase which accepts ubiquitin from an E2 ubiquitin-conjugating enzyme in the form of a thioester and then directly transfers the ubiquitin to targeted substrates. Catalyzes monoubiquitination of 26S proteasome subunit PSMC2/RPT1. The chain is E3 ubiquitin-protein ligase RNF181 (rnf181) from Xenopus tropicalis (Western clawed frog).